Consider the following 93-residue polypeptide: Sec-independent protein translocase protein TatA (93 aa).

The chain crosses the membrane as a helical span at residues 1–21 (MGAMSPWHWAIVALVVVILFG). The segment at 44 to 93 (KEMQNDNSTPAPTAQQSAPAELPVADTTTAPVTPPAPVQPQPQHTEPKSA) is disordered. The span at 51-74 (STPAPTAQQSAPAELPVADTTTAP) shows a compositional bias: low complexity.

The protein belongs to the TatA/E family. In terms of assembly, the Tat system comprises two distinct complexes: a TatABC complex, containing multiple copies of TatA, TatB and TatC subunits, and a separate TatA complex, containing only TatA subunits. Substrates initially bind to the TatABC complex, which probably triggers association of the separate TatA complex to form the active translocon.

It localises to the cell membrane. In terms of biological role, part of the twin-arginine translocation (Tat) system that transports large folded proteins containing a characteristic twin-arginine motif in their signal peptide across membranes. TatA could form the protein-conducting channel of the Tat system. The protein is Sec-independent protein translocase protein TatA of Rhodococcus opacus (strain B4).